Here is a 1740-residue protein sequence, read N- to C-terminus: Vitamin B12-dependent ribonucleoside-diphosphate reductase (1740 aa).

Positions 4 to 96 (EKVMKRDGRI…LYRKKKAEIR (93 aa)) constitute an ATP-cone domain. Residues T257, 272–273 (AC), and G301 contribute to the substrate site. C273 and C1308 are disulfide-bonded. The DOD-type homing endonuclease 1 domain occupies 443–582 (LAGFIAGDGC…VTHYLNALGI (140 aa)). N913 (proton acceptor) is an active-site residue. Substrate is bound at residue 913–914 (NP). The DOD-type homing endonuclease 2 domain occupies 1063–1194 (VLGWFIGDGY…VQDLLLLFGI (132 aa)). C1297 (cysteine radical intermediate) is an active-site residue. Substrate is bound by residues 1297–1299 (CGE) and 1471–1475 (PTGSV). Catalysis depends on E1299, which acts as the Proton acceptor.

The protein belongs to the ribonucleoside diphosphate reductase class-2 family. Adenosylcob(III)alamin is required as a cofactor. Post-translationally, this protein undergoes a protein self splicing that involves a post-translational excision of the intervening region (intein) followed by peptide ligation.

It catalyses the reaction a 2'-deoxyribonucleoside 5'-diphosphate + [thioredoxin]-disulfide + H2O = a ribonucleoside 5'-diphosphate + [thioredoxin]-dithiol. Provides the precursors necessary for DNA synthesis. Catalyzes the biosynthesis of deoxyribonucleotides from the corresponding ribonucleotides. The sequence is that of Vitamin B12-dependent ribonucleoside-diphosphate reductase (rnr) from Pyrococcus furiosus (strain ATCC 43587 / DSM 3638 / JCM 8422 / Vc1).